The chain runs to 340 residues: MNSTVSMTVIGAGSYGTSLAITLARNGHNVVLWGHNPEHVGALQRVRCNQKFLPDVSFPDSLLLETDLIKALTASRDILVVVPSHVFGEVLKQIKPHLRPDSRIVWATKGLEADTGRLLQDVAREILGNEIPLAVLSGPTFAKELAAGLPTAIAISATESAFGDGLQQLFHCGKSFRVYKNPDFIGVQLGGAVKNVIAIGAGISDGMGFGANARTALITRGLAEMSRLGAALGADPSTFMGMAGLGDLVLTCTDNQSRNRRFGMMLGQGISVEEAQYQIGQVVEGYRNTKEVRALANRANVEMPIAEQIYQILYCNKNVIEAAQALLGRARKDESDNVRS.

4 residues coordinate NADPH: Ser14, Tyr15, His35, and Lys109. Sn-glycerol 3-phosphate is bound by residues Lys109, Gly138, and Thr140. Residue Ala142 participates in NADPH binding. Residues Lys194, Asp247, Ser257, Arg258, and Asn259 each contribute to the sn-glycerol 3-phosphate site. Lys194 functions as the Proton acceptor in the catalytic mechanism. NADPH is bound at residue Arg258. NADPH-binding residues include Val282 and Glu284.

It belongs to the NAD-dependent glycerol-3-phosphate dehydrogenase family.

Its subcellular location is the cytoplasm. The enzyme catalyses sn-glycerol 3-phosphate + NAD(+) = dihydroxyacetone phosphate + NADH + H(+). It carries out the reaction sn-glycerol 3-phosphate + NADP(+) = dihydroxyacetone phosphate + NADPH + H(+). It participates in membrane lipid metabolism; glycerophospholipid metabolism. Its function is as follows. Catalyzes the reduction of the glycolytic intermediate dihydroxyacetone phosphate (DHAP) to sn-glycerol 3-phosphate (G3P), the key precursor for phospholipid synthesis. This is Glycerol-3-phosphate dehydrogenase [NAD(P)+] from Photorhabdus laumondii subsp. laumondii (strain DSM 15139 / CIP 105565 / TT01) (Photorhabdus luminescens subsp. laumondii).